The following is a 450-amino-acid chain: Tubulin alpha-6 chain (450 aa).

Glutamine 11, glutamate 71, glycine 144, threonine 145, threonine 179, asparagine 206, and asparagine 228 together coordinate GTP. A Mg(2+)-binding site is contributed by glutamate 71. The active site involves glutamate 254. Threonine 349 is subject to Phosphothreonine. The tract at residues lysine 430–tyrosine 450 is disordered. Residues aspartate 431–tyrosine 450 are compositionally biased toward acidic residues.

This sequence belongs to the tubulin family. In terms of assembly, dimer of alpha and beta chains. A typical microtubule is a hollow water-filled tube with an outer diameter of 25 nm and an inner diameter of 15 nM. Alpha-beta heterodimers associate head-to-tail to form protofilaments running lengthwise along the microtubule wall with the beta-tubulin subunit facing the microtubule plus end conferring a structural polarity. Microtubules usually have 13 protofilaments but different protofilament numbers can be found in some organisms and specialized cells. Interacts with TFCB. Mg(2+) serves as cofactor. Undergoes a tyrosination/detyrosination cycle, the cyclic removal and re-addition of a C-terminal tyrosine residue by the enzymes tubulin tyrosine carboxypeptidase (TTCP) and tubulin tyrosine ligase (TTL), respectively. Post-translationally, acetylation of alpha chains at Lys-40 stabilizes microtubules and affects affinity and processivity of microtubule motors. This modification has a role in multiple cellular functions, ranging from cell motility, cell cycle progression or cell differentiation to intracellular trafficking and signaling.

The protein resides in the cytoplasm. Its subcellular location is the cytoskeleton. The enzyme catalyses GTP + H2O = GDP + phosphate + H(+). In terms of biological role, tubulin is the major constituent of microtubules, a cylinder consisting of laterally associated linear protofilaments composed of alpha- and beta-tubulin heterodimers. Microtubules grow by the addition of GTP-tubulin dimers to the microtubule end, where a stabilizing cap forms. Below the cap, tubulin dimers are in GDP-bound state, owing to GTPase activity of alpha-tubulin. The chain is Tubulin alpha-6 chain (TUBA6) from Arabidopsis thaliana (Mouse-ear cress).